The following is a 359-amino-acid chain: 4-galactosyl-N-acetylglucosaminide 3-alpha-L-fucosyltransferase 9 (359 aa).

The Cytoplasmic segment spans residues Met1–Pro11. The helical; Signal-anchor for type II membrane protein transmembrane segment at Phe12–Pro32 threads the bilayer. Over Thr33–Asn359 the chain is Lumenal. Asn62 carries N-linked (GlcNAc...) asparagine glycosylation. Positions Glu63–Tyr168 are acceptor-binding. Gln75 contacts a beta-D-galactosyl-(1-&gt;4)-N-acetyl-beta-D-glucosaminyl derivative. Disulfide bonds link Cys82–Cys335, Cys91–Cys338, and Cys190–Cys238. Asn101 is a glycosylation site (N-linked (GlcNAc...) asparagine). A beta-D-galactosyl-(1-&gt;4)-N-acetyl-beta-D-glucosaminyl derivative is bound at residue Glu137. Residue Glu137 is the Nucleophile of the active site. Glu137 is a GDP-beta-L-fucose binding site. The N-linked (GlcNAc...) asparagine glycan is linked to Asn153. GDP-beta-L-fucose is bound by residues Tyr168, Val192, Ser194, Asn195, Arg202, Val226, Tyr241, Asn246, Tyr252, Glu255, and Lys256. Residues Gly169–Leu326 are donor-binding. Residues Pro327–Asn359 form an acceptor-binding region.

This sequence belongs to the glycosyltransferase 10 family. Homodimer. Post-translationally, N-glycosylated with complex-type N-glycans.

It is found in the golgi apparatus. Its subcellular location is the trans-Golgi network membrane. The protein resides in the golgi apparatus membrane. It catalyses the reaction a beta-D-galactosyl-(1-&gt;4)-N-acetyl-beta-D-glucosaminyl derivative + GDP-beta-L-fucose = a beta-D-galactosyl-(1-&gt;4)-[alpha-L-fucosyl-(1-&gt;3)]-N-acetyl-beta-D-glucosaminyl derivative + GDP + H(+). It carries out the reaction an alpha-Neu5Ac-(2-&gt;3)-beta-D-Gal-(1-&gt;4)-beta-D-GlcNAc-(1-&gt;3)-beta-D-Gal-(1-&gt;4)-beta-D-GlcNAc derivative + GDP-beta-L-fucose = an alpha-Neu5Ac-(2-&gt;3)-beta-D-Gal-(1-&gt;4)-beta-D-GlcNAc-(1-&gt;3)-beta-D-Gal-(1-&gt;4)-[alpha-L-Fuc-(1-&gt;3)]-beta-D-GlcNAc derivative + GDP + H(+). The catalysed reaction is alpha-N-glycoloylneuraminosyl-(2-&gt;3)-beta-D-galactosyl-(1-&gt;4)-N-acetyl-beta-D-glucosaminyl-(1-&gt;3)-beta-D-galactosyl-(1-&gt;4)-N-acetyl-beta-D-glucosaminyl-(1-&gt;3)-beta-D-galactosyl-(1-&gt;4)-beta-D-glucosyl-(1&lt;-&gt;1')-ceramide + GDP-beta-L-fucose = alpha-N-glycoloylneuraminosyl-(2-&gt;3)-beta-D-galactosyl-(1-&gt;4)-N-acetyl-beta-D-glucosaminyl-(1-&gt;3)-beta-D-galactosyl-(1-&gt;4)-[alpha-L-fucosyl-(1-&gt;3)]-N-acetyl-beta-D-glucosaminyl-(1-&gt;3)-beta-D-galactosyl-(1-&gt;4)-beta-D-glucosyl-(1&lt;-&gt;1')-ceramide + GDP + H(+). The enzyme catalyses alpha-D-galactosyl-(1-&gt;3)-beta-D-galactosyl-(1-&gt;4)-N-acetyl-beta-D-glucosaminyl-(1-&gt;3)-beta-D-galactosyl-(1-&gt;4)-beta-D-glucosyl-(1&lt;-&gt;1')-ceramide + GDP-beta-L-fucose = a neolactoside IV(3)-alpha-Gal,III(3)-alpha-Fuc-nLc4Cer + GDP + H(+). It catalyses the reaction a neolactoside nLc4Cer + GDP-beta-L-fucose = a neolactoside III(3)-alpha-Fuc-nLc4Cer + GDP + H(+). It carries out the reaction an N-acetyl-alpha-neuraminyl-(2-&gt;3)-beta-D-galactosyl-(1-&gt;4)-N-acetyl-beta-D-glucosaminyl derivative + GDP-beta-L-fucose = an alpha-Neu5Ac-(2-&gt;3)-beta-D-Gal-(1-&gt;4)-[alpha-L-Fuc-(1-&gt;3)]-beta-D-GlcNAc derivative + GDP + H(+). The catalysed reaction is beta-D-Gal-(1-&gt;4)-beta-D-GlcNAc-(1-&gt;3)-beta-D-Gal-(1-&gt;4)-D-Glc + GDP-beta-L-fucose = beta-D-Gal-(1-&gt;4)-[alpha-L-Fuc-(1-&gt;3)]-beta-D-GlcNAc-(1-&gt;3)-beta-D-Gal-(1-&gt;4)-D-Glc + GDP + H(+). The enzyme catalyses an alpha-L-Fuc-(1-&gt;2)-beta-D-Gal-(1-&gt;4)-beta-D-GlcNAc derivative + GDP-beta-L-fucose = an alpha-L-Fuc-(1-&gt;2)-beta-D-Gal-(1-&gt;4)-[alpha-L-Fuc-(1-&gt;3)]-beta-D-GlcNAc derivative + GDP + H(+). It participates in protein modification; protein glycosylation. Its pathway is glycolipid biosynthesis. With respect to regulation, activated by Mn2+. Catalyzes alpha(1-&gt;3) linkage of fucosyl moiety transferred from GDP-beta-L-fucose to N-acetyl glucosamine (GlcNAc) within type 2 lactosamine (LacNAc, beta-D-Gal-(1-&gt;4)-beta-D-GlcNAc-) glycan attached to glycolipids and N- or O-linked glycoproteins. Fucosylates distal type 2 LacNAc and its fucosylated (H-type 2 LacNAc) and sialylated (sialyl-type 2 LacNAc) derivatives to form Lewis x (Lex) (CD15) and Lewis y (Ley) antigenic epitopes involved in cell adhesion and differentiation. Generates Lex epitopes in the brain, presumably playing a role in the maintenance of neuronal stemness and neurite outgrowth in progenitor neural cells. Fucosylates the internal type 2 LacNAc unit of the polylactosamine chain to form VIM-2 antigen that serves as recognition epitope for SELE. Can also modify milk oligosaccharides in particular type 2 tetrasaccharide LNnT. This chain is 4-galactosyl-N-acetylglucosaminide 3-alpha-L-fucosyltransferase 9, found in Cricetulus griseus (Chinese hamster).